The sequence spans 377 residues: Putative efflux system component YknX (377 aa).

Residues 3–23 (KVWIGIGIAVIVALFVGINIY) form a helical membrane-spanning segment. Positions 95–187 (TNEQLSLEKE…RVSDLEVKSE (93 aa)) form a coiled coil.

Belongs to the membrane fusion protein (MFP) (TC 8.A.1) family. As to quaternary structure, part of a complex composed of YknX, YknY and YknZ. The complex interacts with YknW.

Its subcellular location is the cell membrane. Functionally, part of an unusual four-component transporter, which is required for protection against the killing factor SdpC (sporulation-delaying protein). The protein is Putative efflux system component YknX (yknX) of Bacillus subtilis (strain 168).